A 165-amino-acid chain; its full sequence is Chorismate pyruvate-lyase (165 aa).

Substrate-binding residues include Met35, Arg77, Leu115, and Glu156.

The protein belongs to the UbiC family. As to quaternary structure, monomer.

It is found in the cytoplasm. It catalyses the reaction chorismate = 4-hydroxybenzoate + pyruvate. The protein operates within cofactor biosynthesis; ubiquinone biosynthesis. Functionally, removes the pyruvyl group from chorismate, with concomitant aromatization of the ring, to provide 4-hydroxybenzoate (4HB) for the ubiquinone pathway. This chain is Chorismate pyruvate-lyase, found in Salmonella arizonae (strain ATCC BAA-731 / CDC346-86 / RSK2980).